Here is a 754-residue protein sequence, read N- to C-terminus: MGIVKGRSRAGLFIGFLFIVNVGFCVFAQESSNEERKIYVVHLGVRRHDDSELVSESHQRMLESVFESAEAARESIVYNYHHGFSGFAARLTDSQAKQLSDRPDVFSVAPNRKVELQSTRIYDYLGLSPSFPSGVLHESNMGSDLVIGFLDSGVWPESPAYNDEGLEPIPKHWKGKCVAGEDFDPAKHCNKKLVGAKYFTDGFDENNSGISEEDFMSPRGYRGHGTMVSSIAASSFVPNVSYGGLAPGVMRGAAPKARIAMYKIVWDRALLMSSTATMVKAFDEAINDGVDVLSISLASAAPFRPIDSITGDLELGSFHAVMKGIPVIAGASNTGPEAYTVANVFPWMLTVAATNIDRTFYADMTFGNNITIIGQAQYTGKEVSAGLVYIEHYKTDTSGMLGKVVLTFVKEDWEMASALATTTINKAAGLIVARSGDYQSDIVYNQPFIYVDYEVGAKILRYIRSSSSPTIKISTGKTLVGRPIATQVCGFSSRGPNGLSPAILKPDIAAPGVTILGATSQAYPDSFGGYFLGTGTSYATPVVAGLVVLLKALHPDWSPAALKSAIMTTAWKTDPSGEPIFAEGEPRKLADPFDYGAGLVNAERAKDPGLVYDMNIDDYIHYFCATGYNDTSITIITGKPTKCSSPLPSILDLNYPAITIPDLEEEVTVTRTVTNVGPVDSVYRAVVEPPRGVEIVVEPETLVFCSNTKKLGFKVRVSSSHKSNTGFFFGSFTWTDGTRNVTIPLSVRIRVLNP.

An N-terminal signal peptide occupies residues 1 to 28; sequence MGIVKGRSRAGLFIGFLFIVNVGFCVFA. Positions 29–117 are cleaved as a propeptide — activation peptide; sequence QESSNEERKI…VAPNRKVELQ (89 aa). In terms of domain architecture, Inhibitor I9 spans 39–116; the sequence is YVVHLGVRRH…SVAPNRKVEL (78 aa). In terms of domain architecture, Peptidase S8 spans 121–606; sequence IYDYLGLSPS…AGLVNAERAK (486 aa). Residue D151 is the Charge relay system of the active site. N-linked (GlcNAc...) asparagine glycosylation is present at N206. The active-site Charge relay system is H224. 2 N-linked (GlcNAc...) asparagine glycosylation sites follow: N239 and N369. S537 acts as the Charge relay system in catalysis. Residues N629 and N740 are each glycosylated (N-linked (GlcNAc...) asparagine).

This sequence belongs to the peptidase S8 family.

It is found in the secreted. This is Subtilisin-like protease SBT3.12 from Arabidopsis thaliana (Mouse-ear cress).